A 387-amino-acid polypeptide reads, in one-letter code: Beta-alanyl-dopamine/carcinine hydrolase (387 aa).

This sequence belongs to the peptidase C45 family. The unprocessed protein forms homodimers. May form heterodimers composed of a 15 kDa alpha subunit and a 30 kDa beta subunit. The protein is synthesized as a 43 kDa precursor which is then self-processed into a 15 kDa alpha subunit and a 30 kDa beta subunit. Processing appears to be necessary for beta-alanyl-dopamine/carcinine hydrolase activity. The beta subunit carries the beta-alanyl-dopamine/carcinine hydrolase activity. Expressed in body, head, optic lobes and retina (at protein level). Expressed in photoreceptor cells R1-R6 in the lamina and in photoreceptor cells R7 and R8 in the medulla (at protein level).

It is found in the cell projection. The protein localises to the axon. The protein resides in the cytoplasm. The catalysed reaction is carcinine + H2O = histamine + beta-alanine. It catalyses the reaction beta-alanyl-dopamine + H2O = dopamine + beta-alanine. In the cuticle, catalyzes the hydrolysis of beta-alanyl-dopamine releasing dopamine and beta-alanine; dopamine is a metabolite involved in the pigmentation and sclerotization of the insect cuticle. In the photoreceptor cells, catalyzes the hydrolysis of carcinine releasing histamine and beta-alanine contributing to the recycling of the neurotransmitter histamine in the optical nerve system. Also, regulates the cuticular hydrocarbon composition in females. This chain is Beta-alanyl-dopamine/carcinine hydrolase, found in Drosophila melanogaster (Fruit fly).